Consider the following 201-residue polypeptide: Imidazole glycerol phosphate synthase subunit HisH (201 aa).

Positions 2-201 constitute a Glutamine amidotransferase type-1 domain; the sequence is KVVILDTGCA…ARLLKNFLEM (200 aa). Catalysis depends on C77, which acts as the Nucleophile. Residues H183 and E185 contribute to the active site.

In terms of assembly, heterodimer of HisH and HisF.

Its subcellular location is the cytoplasm. It carries out the reaction 5-[(5-phospho-1-deoxy-D-ribulos-1-ylimino)methylamino]-1-(5-phospho-beta-D-ribosyl)imidazole-4-carboxamide + L-glutamine = D-erythro-1-(imidazol-4-yl)glycerol 3-phosphate + 5-amino-1-(5-phospho-beta-D-ribosyl)imidazole-4-carboxamide + L-glutamate + H(+). The enzyme catalyses L-glutamine + H2O = L-glutamate + NH4(+). It participates in amino-acid biosynthesis; L-histidine biosynthesis; L-histidine from 5-phospho-alpha-D-ribose 1-diphosphate: step 5/9. Its function is as follows. IGPS catalyzes the conversion of PRFAR and glutamine to IGP, AICAR and glutamate. The HisH subunit catalyzes the hydrolysis of glutamine to glutamate and ammonia as part of the synthesis of IGP and AICAR. The resulting ammonia molecule is channeled to the active site of HisF. This Photorhabdus laumondii subsp. laumondii (strain DSM 15139 / CIP 105565 / TT01) (Photorhabdus luminescens subsp. laumondii) protein is Imidazole glycerol phosphate synthase subunit HisH.